The primary structure comprises 421 residues: Alpha-tubulin N-acetyltransferase 1 (421 aa).

An N-acetyltransferase domain is found at 1–190 (MEFPFDVDAL…NNFVIFEGFF (190 aa)). An N6-acetyllysine; by autocatalysis modification is found at Lys56. An acetyl-CoA-binding site is contributed by 124 to 137 (FYIHESVQRHGHGR). The residue at position 146 (Lys146) is an N6-acetyllysine; by autocatalysis. 160 to 169 (SPKLLKFLNK) is an acetyl-CoA binding site. Residues 214–235 (PIPAAPARKLPPKRAEGDIKPY) form a disordered region. Residues 226-235 (KRAEGDIKPY) show a composition bias toward basic and acidic residues. Lys233 and Lys244 each carry N6-acetyllysine; by autocatalysis. Residues 252–284 (PLNRAPRRATPPAHPPPRSSSLGNSPDRGPLRP) are disordered. Phosphoserine is present on residues Ser272 and Ser276. Arg305 is modified (asymmetric dimethylarginine). A Phosphoserine modification is found at Ser315. Arg323 carries the omega-N-methylarginine modification. A compositionally biased stretch (polar residues) spans 342–351 (FNTSFLGTGN). The disordered stretch occupies residues 342-398 (FNTSFLGTGNQERKQGEQEAEDRSASEDQVLLQDGSGEEPTHTVAPRAQAPPAQSWM). A compositionally biased stretch (basic and acidic residues) spans 352-367 (QERKQGEQEAEDRSAS).

It belongs to the acetyltransferase ATAT1 family. In terms of assembly, component of the BBSome complex. Interacts with AP2 alpha-adaptins, including AP2A2, but not with AP1 gamma-adaptin (AP1G1/AP1G2); this interaction is required for efficient alpha-tubulin acetylation, hence clathrin-coated pits are sites of microtubule acetylation. Post-translationally, autoacetylation strongly increases tubulin acetylation.

It is found in the cytoplasm. The protein localises to the membrane. Its subcellular location is the clathrin-coated pit. The protein resides in the cell junction. It localises to the focal adhesion. It is found in the cell projection. The protein localises to the axon. Its subcellular location is the cytoskeleton. The protein resides in the spindle. It catalyses the reaction L-lysyl-[alpha-tubulin] + acetyl-CoA = N(6)-acetyl-L-lysyl-[alpha-tubulin] + CoA + H(+). In terms of biological role, specifically acetylates 'Lys-40' in alpha-tubulin on the lumenal side of microtubules. Promotes microtubule destabilization and accelerates microtubule dynamics; this activity may be independent of acetylation activity. Acetylates alpha-tubulin with a slow enzymatic rate, due to a catalytic site that is not optimized for acetyl transfer. Enters the microtubule through each end and diffuses quickly throughout the lumen of microtubules. Acetylates only long/old microtubules because of its slow acetylation rate since it does not have time to act on dynamically unstable microtubules before the enzyme is released. Required for normal sperm flagellar function. Promotes directional cell locomotion and chemotaxis, through AP2A2-dependent acetylation of alpha-tubulin at clathrin-coated pits that are concentrated at the leading edge of migrating cells. May facilitate primary cilium assembly. In Rattus norvegicus (Rat), this protein is Alpha-tubulin N-acetyltransferase 1.